We begin with the raw amino-acid sequence, 244 residues long: Protein pendolino (244 aa).

Residues 20 to 176 (QQEYKILAEY…VQENIKESKE (157 aa)) form the UBC core domain.

This sequence belongs to the ubiquitin-conjugating enzyme family. FTS subfamily. In terms of assembly, interacts (via N-terminus) with cav/HOAP (via N-terminus); the interaction is direct. Probably interacts (via N-terminus and UBC domain) with ver and moi.

The protein resides in the nucleus. It localises to the nucleolus. Its subcellular location is the chromosome. Required for efficient DNA replication, probably through involvement in telomere replication. May have a role in telomere capping of heterochromatic chromosome ends. The sequence is that of Protein pendolino from Drosophila melanogaster (Fruit fly).